The sequence spans 255 residues: Ribosomal RNA small subunit methyltransferase A (255 aa).

Positions 12, 14, 39, 60, 84, and 106 each coordinate S-adenosyl-L-methionine.

This sequence belongs to the class I-like SAM-binding methyltransferase superfamily. rRNA adenine N(6)-methyltransferase family. RsmA subfamily.

Its subcellular location is the cytoplasm. The enzyme catalyses adenosine(1518)/adenosine(1519) in 16S rRNA + 4 S-adenosyl-L-methionine = N(6)-dimethyladenosine(1518)/N(6)-dimethyladenosine(1519) in 16S rRNA + 4 S-adenosyl-L-homocysteine + 4 H(+). In terms of biological role, specifically dimethylates two adjacent adenosines (A1518 and A1519) in the loop of a conserved hairpin near the 3'-end of 16S rRNA in the 30S particle. May play a critical role in biogenesis of 30S subunits. This Herminiimonas arsenicoxydans protein is Ribosomal RNA small subunit methyltransferase A.